Consider the following 283-residue polypeptide: Shikimate dehydrogenase (NADP(+)) (283 aa).

Shikimate is bound by residues 19–21 (SLS) and Thr-66. Catalysis depends on Lys-70, which acts as the Proton acceptor. Positions 91 and 106 each coordinate shikimate. NADP(+)-binding positions include 129–133 (GAGGA), 153–158 (NRTPEK), and Leu-224. Tyr-226 is a shikimate binding site. An NADP(+)-binding site is contributed by Gly-247.

This sequence belongs to the shikimate dehydrogenase family. In terms of assembly, homodimer.

It catalyses the reaction shikimate + NADP(+) = 3-dehydroshikimate + NADPH + H(+). It participates in metabolic intermediate biosynthesis; chorismate biosynthesis; chorismate from D-erythrose 4-phosphate and phosphoenolpyruvate: step 4/7. Functionally, involved in the biosynthesis of the chorismate, which leads to the biosynthesis of aromatic amino acids. Catalyzes the reversible NADPH linked reduction of 3-dehydroshikimate (DHSA) to yield shikimate (SA). The sequence is that of Shikimate dehydrogenase (NADP(+)) from Methanothermobacter thermautotrophicus (strain ATCC 29096 / DSM 1053 / JCM 10044 / NBRC 100330 / Delta H) (Methanobacterium thermoautotrophicum).